The chain runs to 394 residues: uncharacterized protein (394 aa).

12 consecutive transmembrane segments (helical) span residues 13-33 (LITTIHMVLTTMIHMALTTMI), 35-55 (MAPTTMIHMALTTMIPTVLPT), 73-95 (TTMTLTVPTTMTLTVPTTMTLTV), 110-130 (ALTVPTMTILMALTMMIHMVL), 152-172 (IHMVLTTMIHMALTTMIPTVL), 179-198 (LMVLTMTIRTAPATTMTLTV), 216-236 (VLLATMILTDLPITTTLTVLP), 241-261 (VLMVPTMTILMALTMMIHMVL), 267-287 (VLMVPATTIRMVLTTMIPTVL), 293-313 (VLMVPTTMIHTAPATTMTLTV), 340-360 (MMTLMVHLIEAVVINTVVTTI), and 372-392 (ILLCLDLSMKILCMSCGYVSA).

The protein resides in the membrane. This is an uncharacterized protein from Saccharomyces cerevisiae (strain ATCC 204508 / S288c) (Baker's yeast).